Reading from the N-terminus, the 732-residue chain is Photosystem I P700 chlorophyll a apoprotein A2 (732 aa).

The next 8 membrane-spanning stretches (helical) occupy residues I46 to A69, L133 to Q156, L173 to I197, M271 to Y289, L328 to Y351, S367 to I393, A415 to H437, and F515 to V533. The [4Fe-4S] cluster site is built by C557 and C566. 2 helical membrane-spanning segments follow: residues A573–W594 and L641–I663. Positions 652, 660, and 668 each coordinate chlorophyll a. Residue W669 participates in phylloquinone binding. A helical membrane pass occupies residues L705–A725.

Belongs to the PsaA/PsaB family. As to quaternary structure, the PsaA/B heterodimer binds the P700 chlorophyll special pair and subsequent electron acceptors. PSI consists of a core antenna complex that captures photons, and an electron transfer chain that converts photonic excitation into a charge separation. The eukaryotic PSI reaction center is composed of at least 11 subunits. P700 is a chlorophyll a/chlorophyll a' dimer, A0 is one or more chlorophyll a, A1 is one or both phylloquinones and FX is a shared 4Fe-4S iron-sulfur center. serves as cofactor.

The protein resides in the plastid. It is found in the chloroplast thylakoid membrane. It catalyses the reaction reduced [plastocyanin] + hnu + oxidized [2Fe-2S]-[ferredoxin] = oxidized [plastocyanin] + reduced [2Fe-2S]-[ferredoxin]. Its function is as follows. PsaA and PsaB bind P700, the primary electron donor of photosystem I (PSI), as well as the electron acceptors A0, A1 and FX. PSI is a plastocyanin/cytochrome c6-ferredoxin oxidoreductase, converting photonic excitation into a charge separation, which transfers an electron from the donor P700 chlorophyll pair to the spectroscopically characterized acceptors A0, A1, FX, FA and FB in turn. Oxidized P700 is reduced on the lumenal side of the thylakoid membrane by plastocyanin or cytochrome c6. The polypeptide is Photosystem I P700 chlorophyll a apoprotein A2 (Cyanidioschyzon merolae (strain NIES-3377 / 10D) (Unicellular red alga)).